A 106-amino-acid polypeptide reads, in one-letter code: PAT complex subunit Asterix (106 aa).

Residues 1-29 (MSANNMSDPRRPNKVLRYKPPPSECNPAL) are disordered. At Ser-2 the chain carries N-acetylserine. The Cytoplasmic segment spans residues 2 to 32 (SANNMSDPRRPNKVLRYKPPPSECNPALDDP). The chain crosses the membrane as a helical span at residues 33–51 (TPDYMNLLGMIFSMCGLML). Residue Lys-52 is a topological domain, lumenal. The chain crosses the membrane as a helical span at residues 53-70 (LKWCAWVAVYCSFISFAN). The Cytoplasmic portion of the chain corresponds to 71 to 74 (SRSS). Residues 75–95 (EDTKQMMSSFMLSISAVVMSY) traverse the membrane as a helical segment. The Lumenal portion of the chain corresponds to 96–106 (LQNPQPMTPPW).

The protein belongs to the Asterix family. In terms of assembly, component of the PAT complex, composed of WDR83OS/Asterix and CCDC47. The PAT complex is part of the multi-pass translocon (MPT) complex, composed of three subcomplexes, the GEL complex (composed of RAB5IF/OPTI and TMCO1), the BOS complex (composed of NCLN/Nicalin, NOMO1 and TMEM147) and the PAT complex (composed of WDR83OS/Asterix and CCDC47). The MPT complex associates with the SEC61 complex.

Its subcellular location is the endoplasmic reticulum membrane. Functionally, component of the multi-pass translocon (MPT) complex that mediates insertion of multi-pass membrane proteins into the lipid bilayer of membranes. The MPT complex takes over after the SEC61 complex: following membrane insertion of the first few transmembrane segments of proteins by the SEC61 complex, the MPT complex occludes the lateral gate of the SEC61 complex to promote insertion of subsequent transmembrane regions. Within the MPT complex, the PAT subcomplex sequesters any highly polar regions in the transmembrane domains away from the non-polar membrane environment until they can be buried in the interior of the fully assembled protein. Within the PAT subcomplex, WDR83OS/Asterix binds to and redirects the substrate to a location behind the SEC61 complex. This chain is PAT complex subunit Asterix (WDR83OS), found in Bos taurus (Bovine).